The sequence spans 472 residues: Glutamate--tRNA ligase (472 aa).

A 'HIGH' region motif is present at residues 9 to 19 (PSPTGPLHIGS). Positions 237–241 (KLSKR) match the 'KMSKS' region motif. Lysine 240 lines the ATP pocket.

Belongs to the class-I aminoacyl-tRNA synthetase family. Glutamate--tRNA ligase type 1 subfamily. As to quaternary structure, monomer.

It localises to the cytoplasm. It carries out the reaction tRNA(Glu) + L-glutamate + ATP = L-glutamyl-tRNA(Glu) + AMP + diphosphate. In terms of biological role, catalyzes the attachment of glutamate to tRNA(Glu) in a two-step reaction: glutamate is first activated by ATP to form Glu-AMP and then transferred to the acceptor end of tRNA(Glu). The sequence is that of Glutamate--tRNA ligase from Buchnera aphidicola subsp. Baizongia pistaciae (strain Bp).